The primary structure comprises 1363 residues: MQPGAALNRRLWLCLGLLQGLANGYSMTPPTLNITEDSYVIDTGDSLSISCRGQHPLEWTWRGAQEVLTTGGKDSEDTQVVQDCEGTEARPYCKVLSLAQTHANNTGSYYCYYKYIKARIEGTTAASTYVFVRDFEQPFINKPDTLLVNRKDSMWVPCLVSIPGLNITLRSQSSVLHPDGQEVLWDDRRGMRVPTLLLRDALYLQCETTWGDQDFLSNPFLVHITGNELYDIQLYPKKSLELLVGEKLVLNCTVWAEFDSGVTFDWDYPGKQAERAKWVPERRSQQTHTELSSILTIHNVSQHDLGPYVCEANNGIQQFRESTEVIVHEKPFISVEWLKGPVLEATAGDEMVKLPVKLAAYPPPEFQWYKDRKAVTGRHNPHALVLKEVTEASAGVYTLALWNSAAGLRQNISLELVVNVPPHIHEKEASSPSIYSRHSRQTLTCTTYGVPQPLSVQWHWRPWTPCKTFAQRSLRRRQPRDGMPQCRDWKEVTTQDAVNPIESLDTWTESVEGKNKTVSKLVIQDANVSAMYKCVVFNKVGQDERLIYFYVTTIPDGFSIESEPSEDPLEGQSVRLSCRADNYTYEHLRWYRLNLSTLHDAQGNPLLLDCKNVHLFATPLEANLEEAEPGARHATLSLNIPRVAPEDEGDYVCEVQDRRSQDKHCHKKYLSVQALEAPRLTQNLTDLLVNVRTSLEMRCPVAGAHVPSIVWYKDERLLEKESGIDLADSNQRLSIQRVREEDAGRYLCSVCNAKGCVNSSASVAVEGSEDKGSMEIVILIGTGVIAVFFWVLLLLIFCNMKRPAHADIKTGYLSIIMDPGEVPLEEQCEYLSYDVSQWEFPRERLHLGRVLGHGAFGKVVEASAFGINKGSSCDTVAVKMLKEGATASEHRALMSELKILIHIGNHLNVVNLLGACTKPNGPLMVIVEFCKYGNLSNFLRVKRETFDPYAEKSPEQRRRFRAMVEGAKADRRRLGSTDRALFTRFLMGKGSARRAPFVQEAEDLWLSPLTMEDLVCYSFQVARGMEFLASRKCIHRDLAARNILLSESDIVKICDFGLARDIYKDPDYVRKGSARLPLKWMAPESIFDKVYTTQSDVWSFGVLLWEIFSLGASPYPGVQINEEFCQRLKDGTRMRAPELATPAIRHIMQSCWSGDPKARPAFSDLVEILGDLLQGGGWQEEEEECMALHSSQSSEEDGFMQASTTALHITEADAESSPPSMHCHSLAARYYNCVSFPGRLVRGTKAPGSSRMKTFEELPMTPTTYKASVDNQTDSGMVLASEEFEQIESRHRQEGSFSRKDPGQHMDISRGHPDLQGRRRRPTQGAQGGKVFYNNEYGEVSQPCTEGDCCPSAGSTFFADSNY.

The N-terminal stretch at 1 to 24 is a signal peptide; sequence MQPGAALNRRLWLCLGLLQGLANG. Over 25–775 the chain is Extracellular; the sequence is YSMTPPTLNI…EGSEDKGSME (751 aa). N-linked (GlcNAc...) asparagine glycosylation is found at Asn33, Asn104, Asn166, Asn251, Asn299, and Asn411. Ig-like C2-type domains follow at residues 44-118, 151-213, 230-326, 331-415, 422-552, 555-671, and 678-764; these read GDSL…YIKA, KDSM…WGDQ, YDIQ…TEVI, PFIS…ISLE, PHIH…FYVT, PDGF…KYLS, and PRLT…ASVA. 2 disulfides stabilise this stretch: Cys51–Cys111 and Cys158–Cys206. Cys252 and Cys310 are disulfide-bonded. 3 cysteine pairs are disulfide-bonded: Cys445-Cys534, Cys466-Cys486, and Cys578-Cys653. N-linked (GlcNAc...) asparagine glycans are attached at residues Asn515, Asn527, Asn582, Asn594, and Asn683. Cys699 and Cys751 are oxidised to a cystine. A glycan (N-linked (GlcNAc...) asparagine) is linked at Asn758. Residues 776 to 796 traverse the membrane as a helical segment; sequence IVILIGTGVIAVFFWVLLLLI. The Cytoplasmic segment spans residues 797-1363; that stretch reads FCNMKRPAHA…GSTFFADSNY (567 aa). Phosphotyrosine; by SRC occurs at positions 830 and 833. In terms of domain architecture, Protein kinase spans 845–1173; it reads LHLGRVLGHG…DLVEILGDLL (329 aa). ATP-binding positions include 851-859 and Lys879; that span reads LGHGAFGKV. The active-site Proton acceptor is Asp1037. Tyr1063 is subject to Phosphotyrosine; by autocatalysis and SRC. Tyr1068, Tyr1230, Tyr1231, and Tyr1265 each carry phosphotyrosine; by autocatalysis. A compositionally biased stretch (basic and acidic residues) spans 1289 to 1317; that stretch reads SRHRQEGSFSRKDPGQHMDISRGHPDLQG. Residues 1289–1330 form a disordered region; it reads SRHRQEGSFSRKDPGQHMDISRGHPDLQGRRRRPTQGAQGGK. A phosphotyrosine; by autocatalysis and SRC mark is found at Tyr1333 and Tyr1337. At Tyr1363 the chain carries Phosphotyrosine; by autocatalysis.

Belongs to the protein kinase superfamily. Tyr protein kinase family. CSF-1/PDGF receptor subfamily. Interacts with VEGFC and VEGFD. Monomer in the absence of bound VEGFC or VEGFD. Homodimer in the presence of bound VEGFC or VEGFD. Can also form a heterodimer with KDR. Interacts with PTPN14; the interaction is enhanced by stimulation with VEGFC. Interacts with CRK, GRB2, PTK2/FAK1, SHC1, PIK3R1 and PTPN11/SHP-2. Identified in a complex with SRC and ITGB1. Identified in a complex with SRC and ITGB1. In terms of processing, autophosphorylated on tyrosine residues upon ligand binding. Autophosphorylation occurs in trans, i.e. one subunit of the dimeric receptor phosphorylates tyrosine residues on the other subunit. Phosphorylation in response to H(2)O(2) is mediated by a process that requires SRC and PRKCD activity. Phosphorylation at Tyr-1068 is required for autophosphorylation at additional tyrosine residues. Phosphorylation at Tyr-1063 and Tyr-1337 is important for interaction with CRK and subsequent activation of MAPK8. Phosphorylation at Tyr-1230, Tyr-1231 and Tyr-1337 is important for interaction with GRB2 and subsequent activation of the AKT1 and MAPK1/ERK2 and/or MAPK3/ERK1 signaling pathways. In response to endothelial cell adhesion onto collagen, can also be phosphorylated in the absence of FLT4 kinase activity by SRC.

Its subcellular location is the cell membrane. The protein resides in the cytoplasm. It localises to the nucleus. It carries out the reaction L-tyrosyl-[protein] + ATP = O-phospho-L-tyrosyl-[protein] + ADP + H(+). Its activity is regulated as follows. Present in an inactive conformation in the absence of bound ligand. Binding of VEGFC or VEGFD leads to dimerization and activation by autophosphorylation on tyrosine residues. Functionally, tyrosine-protein kinase that acts as a cell-surface receptor for VEGFC and VEGFD, and plays an essential role in adult lymphangiogenesis and in the development of the vascular network and the cardiovascular system during embryonic development. Promotes proliferation, survival and migration of endothelial cells, and regulates angiogenic sprouting. Signaling by activated FLT4 leads to enhanced production of VEGFC, and to a lesser degree VEGFA, thereby creating a positive feedback loop that enhances FLT4 signaling. Modulates KDR signaling by forming heterodimers. Mediates activation of the MAPK1/ERK2, MAPK3/ERK1 signaling pathway, of MAPK8 and the JUN signaling pathway, and of the AKT1 signaling pathway. Phosphorylates SHC1. Mediates phosphorylation of PIK3R1, the regulatory subunit of phosphatidylinositol 3-kinase. Promotes phosphorylation of MAPK8 at 'Thr-183' and 'Tyr-185', and of AKT1 at 'Ser-473'. The chain is Vascular endothelial growth factor receptor 3 (Flt4) from Rattus norvegicus (Rat).